A 483-amino-acid polypeptide reads, in one-letter code: V-type proton ATPase subunit H (483 aa).

The residue at position 483 (Ser-483) is a Phosphoserine.

This sequence belongs to the V-ATPase H subunit family. In terms of assembly, V-ATPase is a heteromultimeric enzyme made up of two complexes: the ATP-hydrolytic V1 complex and the proton translocation V0 complex. The V1 complex consists of three catalytic AB heterodimers that form a heterohexamer, three peripheral stalks each consisting of EG heterodimers, one central rotor including subunits D and F, and the regulatory subunits C and H. The proton translocation complex V0 consists of the proton transport subunit a, a ring of proteolipid subunits c9c'', rotary subunit d, subunits e and f, and the accessory subunits ATP6AP1/Ac45 and ATP6AP2/PRR. Interacts with AP2M1. In terms of tissue distribution, expressed in brain (at protein level).

Its subcellular location is the cytoplasmic vesicle. The protein resides in the clathrin-coated vesicle membrane. Functionally, subunit of the V1 complex of vacuolar(H+)-ATPase (V-ATPase), a multisubunit enzyme composed of a peripheral complex (V1) that hydrolyzes ATP and a membrane integral complex (V0) that translocates protons. V-ATPase is responsible for acidifying and maintaining the pH of intracellular compartments and in some cell types, is targeted to the plasma membrane, where it is responsible for acidifying the extracellular environment. Subunit H is essential for V-ATPase activity, but not for the assembly of the complex. Involved in the endocytosis mediated by clathrin-coated pits, required for the formation of endosomes. This Bos taurus (Bovine) protein is V-type proton ATPase subunit H (ATP6V1H).